Here is a 238-residue protein sequence, read N- to C-terminus: Group 3 late-embryogenesis abundant protein, mitochondrial (238 aa).

Residues 41–62 (SSGSGRPADNWAESQKEKAKAG) are disordered. A coiled-coil region spans residues 50-202 (NWAESQKEKA…AGDLKDKAQQ (153 aa)). LEA 11-mer repeat repeat units lie at residues 64–74 (KDAQAEVGKVA), 89–99 (KDAVKQGANDL), 140–150 (KEAAENAWEKT), 151–161 (KDVAENLKDKV), 179–189 (KDRAQDAASEV), and 190–200 (KHKAGDLKDKA). Composition is skewed to basic and acidic residues over residues 182–200 (AQDA…KDKA) and 213–225 (DNRK…RRDS). Residues 182-238 (AQDAASEVKHKAGDLKDKAQQVIHDATTQSGDNRKQDQQQRRDSQGSQSGQNSRSRN) form a disordered region. The segment covering 226–238 (QGSQSGQNSRSRN) has biased composition (low complexity).

It belongs to the LEA type 4 family.

The protein resides in the mitochondrion. Its function is as follows. Mitochondrial heat soluble protein acting as a molecular shield in water-deficient condition. This chain is Group 3 late-embryogenesis abundant protein, mitochondrial, found in Hypsibius exemplaris (Freshwater tardigrade).